A 574-amino-acid polypeptide reads, in one-letter code: K(+)/H(+) antiporter NhaP2 (574 aa).

13 helical membrane-spanning segments follow: residues 6-26 (INSF…LSPV), 34-54 (ILLI…GGIL), 58-78 (YSTA…DGGM), 87-107 (VALW…TSIT), 109-129 (VMAA…GAIV), 173-193 (IAIL…ISFI), 196-216 (FGLG…LVNL), 219-239 (LAEG…YAAS), 242-262 (LGGS…NKPT), 271-291 (VLDG…GLLL), 299-319 (IWLP…PLAV), 335-355 (WFIS…VFPM), and 359-379 (LPGA…SLLV). Residues 405-486 (SGVEIYPSSE…LEALSNLFSQ (82 aa)) enclose the RCK C-terminal domain.

The protein belongs to the monovalent cation:proton antiporter 1 (CPA1) transporter (TC 2.A.36) family. NhaP2 subfamily.

The protein localises to the cell inner membrane. The catalysed reaction is K(+)(in) + H(+)(out) = K(+)(out) + H(+)(in). K(+)/H(+) antiporter that extrudes potassium in exchange for external protons and maintains the internal concentration of potassium under toxic levels. The sequence is that of K(+)/H(+) antiporter NhaP2 from Shewanella sp. (strain MR-7).